The chain runs to 416 residues: Homogentisate 1,2-dioxygenase (416 aa).

The active-site Proton acceptor is histidine 275. Fe cation is bound by residues histidine 318 and glutamate 324. The homogentisate site is built by tyrosine 333 and histidine 354. A Fe cation-binding site is contributed by histidine 354.

This sequence belongs to the homogentisate dioxygenase family. Hexamer; dimer of trimers. Fe cation serves as cofactor.

It carries out the reaction homogentisate + O2 = 4-maleylacetoacetate + H(+). The protein operates within amino-acid degradation; L-phenylalanine degradation; acetoacetate and fumarate from L-phenylalanine: step 4/6. Its function is as follows. Involved in the catabolism of homogentisate (2,5-dihydroxyphenylacetate or 2,5-OH-PhAc), a central intermediate in the degradation of phenylalanine and tyrosine. Catalyzes the oxidative ring cleavage of the aromatic ring of homogentisate to yield maleylacetoacetate. This chain is Homogentisate 1,2-dioxygenase, found in Legionella pneumophila (strain Corby).